A 136-amino-acid polypeptide reads, in one-letter code: S-protein homolog 17 (136 aa).

The signal sequence occupies residues Met1–Ala22.

Belongs to the plant self-incompatibility (S1) protein family.

It is found in the secreted. The polypeptide is S-protein homolog 17 (Arabidopsis thaliana (Mouse-ear cress)).